We begin with the raw amino-acid sequence, 214 residues long: Outer-membrane lipoprotein LolB (214 aa).

The signal sequence occupies residues 1-25 (MNNLKRFTKSIFSCIALSGLLFLGG). The N-palmitoyl cysteine moiety is linked to residue C26. A lipid anchor (S-diacylglycerol cysteine) is attached at C26.

Belongs to the LolB family. In terms of assembly, monomer.

It localises to the cell outer membrane. Its function is as follows. Plays a critical role in the incorporation of lipoproteins in the outer membrane after they are released by the LolA protein. The polypeptide is Outer-membrane lipoprotein LolB (Shewanella sp. (strain MR-4)).